The primary structure comprises 81 residues: ATP synthase subunit c (81 aa).

2 helical membrane-spanning segments follow: residues 7–27 (AASVVAAGLAVGLGAIGPGLG) and 57–77 (FAFMESLTIYGLVVALVLLFA).

Belongs to the ATPase C chain family. In terms of assembly, F-type ATPases have 2 components, F(1) - the catalytic core - and F(0) - the membrane proton channel. F(1) has five subunits: alpha(3), beta(3), gamma(1), delta(1), epsilon(1). F(0) has four main subunits: a(1), b(1), b'(1) and c(10-14). The alpha and beta chains form an alternating ring which encloses part of the gamma chain. F(1) is attached to F(0) by a central stalk formed by the gamma and epsilon chains, while a peripheral stalk is formed by the delta, b and b' chains.

Its subcellular location is the cellular thylakoid membrane. In terms of biological role, f(1)F(0) ATP synthase produces ATP from ADP in the presence of a proton or sodium gradient. F-type ATPases consist of two structural domains, F(1) containing the extramembraneous catalytic core and F(0) containing the membrane proton channel, linked together by a central stalk and a peripheral stalk. During catalysis, ATP synthesis in the catalytic domain of F(1) is coupled via a rotary mechanism of the central stalk subunits to proton translocation. Key component of the F(0) channel; it plays a direct role in translocation across the membrane. A homomeric c-ring of between 10-14 subunits forms the central stalk rotor element with the F(1) delta and epsilon subunits. This chain is ATP synthase subunit c, found in Prochlorococcus marinus (strain MIT 9301).